The sequence spans 65 residues: Large ribosomal subunit protein bL35 (65 aa).

The interval 1-22 (MPKIKTVRGAAKRFKKTGKGGF) is disordered. A compositionally biased stretch (basic residues) spans 10–22 (AAKRFKKTGKGGF).

This sequence belongs to the bacterial ribosomal protein bL35 family.

The sequence is that of Large ribosomal subunit protein bL35 from Escherichia coli O127:H6 (strain E2348/69 / EPEC).